The following is a 908-amino-acid chain: Isoleucine--tRNA ligase (908 aa).

The short motif at Pro-59–His-69 is the 'HIGH' region element. Position 554 (Glu-554) interacts with L-isoleucyl-5'-AMP. Positions Lys-595–Ser-599 match the 'KMSKS' region motif. ATP is bound at residue Lys-598. Residues Cys-882, Cys-885, Cys-898, and Cys-901 each contribute to the Zn(2+) site.

It belongs to the class-I aminoacyl-tRNA synthetase family. IleS type 1 subfamily. In terms of assembly, monomer. It depends on Zn(2+) as a cofactor.

The protein resides in the cytoplasm. It catalyses the reaction tRNA(Ile) + L-isoleucine + ATP = L-isoleucyl-tRNA(Ile) + AMP + diphosphate. Its function is as follows. Catalyzes the attachment of isoleucine to tRNA(Ile). As IleRS can inadvertently accommodate and process structurally similar amino acids such as valine, to avoid such errors it has two additional distinct tRNA(Ile)-dependent editing activities. One activity is designated as 'pretransfer' editing and involves the hydrolysis of activated Val-AMP. The other activity is designated 'posttransfer' editing and involves deacylation of mischarged Val-tRNA(Ile). In Mesoplasma florum (strain ATCC 33453 / NBRC 100688 / NCTC 11704 / L1) (Acholeplasma florum), this protein is Isoleucine--tRNA ligase.